Reading from the N-terminus, the 82-residue chain is CLAVATA3/ESR (CLE)-related protein 53 (82 aa).

The N-terminal stretch at 1–26 (MATSTNSREFLIFICVLTLLVVRSEA) is a signal peptide. Hydroxyproline occurs at positions 74 and 77. O-linked (Ara...) hydroxyproline glycosylation occurs at Pro-77.

It belongs to the CLV3/ESR signal peptide family. The O-glycosylation (arabinosylation) of the hydroxyproline Pro-77 enhances binding affinity of the CLE53p peptide for its receptor. Expressed in root vasculature.

It localises to the secreted. The protein resides in the extracellular space. Its function is as follows. Signaling peptide involved in the regulation of root colonization by arbuscular mycorrhizal (AM) fungi. Moves from root to shoot to function with the receptor kinase SUNN, in a signaling pathway that repress strigolactone biosynthetic genes and strigolactone content in the roots, and consequently reduces the promotion of further colonization by AM fungi. The chain is CLAVATA3/ESR (CLE)-related protein 53 from Medicago truncatula (Barrel medic).